We begin with the raw amino-acid sequence, 694 residues long: Outer dynein arm-docking complex subunit 1 (694 aa).

Coiled-coil stretches lie at residues 27-192 (ELSR…RYLN) and 222-259 (REEA…HLEQ). Positions 271-290 (RQPDPGVVQKEEQRAWETSE) are disordered. The stretch at 339–418 (NFINEQNSEL…EKIKTDIQVL (80 aa)) forms a coiled coil. Disordered regions lie at residues 531-550 (QDEE…TLSS) and 571-694 (SILS…RGYN). Ser536, Ser542, Ser543, and Ser545 each carry phosphoserine. The segment covering 628–642 (TSSSSYLGSTGYLET) has biased composition (low complexity). Over residues 655–672 (SQSMGSEMSRGFSSGSGQ) the composition is skewed to polar residues. The segment covering 673-687 (TSSAAPASRPSSATS) has biased composition (low complexity).

It belongs to the ODA1/DCC2 family. As to quaternary structure, component of the outer dynein arm-docking complex along with ODAD2, ODAD3, ODAD4 and CLXN. Interacts with ODAD3. Interacts with ODAD4; this interaction may facilitate the recruitment and/or attachment of outer dynein arm docking complex proteins,including ODAD1, ODAD3, and ODAD4 to ciliary axonemes. Interacts with DNAH9. Interacts with MNS1. Interacts with PIERCE1 and PIERCE2; the interactions link the outer dynein arms docking complex (ODA-DC) to the internal microtubule inner proteins (MIP) in cilium axoneme.

It localises to the cytoplasm. The protein resides in the cytoskeleton. It is found in the cilium axoneme. Component of the outer dynein arm-docking complex that mediates outer dynein arms (ODA) binding onto the doublet microtubule. Involved in mediating assembly of both ODAs and their axonemal docking complex onto ciliary microtubules. The protein is Outer dynein arm-docking complex subunit 1 (Odad1) of Rattus norvegicus (Rat).